The sequence spans 185 residues: Ribosome-recycling factor (185 aa).

This sequence belongs to the RRF family.

The protein localises to the cytoplasm. In terms of biological role, responsible for the release of ribosomes from messenger RNA at the termination of protein biosynthesis. May increase the efficiency of translation by recycling ribosomes from one round of translation to another. This Shewanella sp. (strain ANA-3) protein is Ribosome-recycling factor.